Consider the following 446-residue polypeptide: Chromosomal replication initiator protein DnaA (446 aa).

Residues 1–92 (MENISDLWNS…SQAEEEIDLP (92 aa)) form a domain I, interacts with DnaA modulators region. Positions 93–109 (PSKPNAAQDDSNHLPQS) are domain II. Positions 110-326 (MLNPKYTFDT…GALIRVVAYS (217 aa)) are domain III, AAA+ region. G154, G156, K157, and T158 together coordinate ATP. The segment at 327–446 (SLINKDINAD…QVEEINDILK (120 aa)) is domain IV, binds dsDNA.

It belongs to the DnaA family. As to quaternary structure, oligomerizes as a right-handed, spiral filament on DNA at oriC.

The protein localises to the cytoplasm. In terms of biological role, plays an essential role in the initiation and regulation of chromosomal replication. ATP-DnaA binds to the origin of replication (oriC) to initiate formation of the DNA replication initiation complex once per cell cycle. Binds the DnaA box (a 9 base pair repeat at the origin) and separates the double-stranded (ds)DNA. Forms a right-handed helical filament on oriC DNA; dsDNA binds to the exterior of the filament while single-stranded (ss)DNA is stabiized in the filament's interior. The ATP-DnaA-oriC complex binds and stabilizes one strand of the AT-rich DNA unwinding element (DUE), permitting loading of DNA polymerase. After initiation quickly degrades to an ADP-DnaA complex that is not apt for DNA replication. Binds acidic phospholipids. This Bacillus cereus (strain 03BB102) protein is Chromosomal replication initiator protein DnaA.